The chain runs to 360 residues: Phospho-N-acetylmuramoyl-pentapeptide-transferase (360 aa).

A run of 10 helical transmembrane segments spans residues 27-47, 71-91, 93-113, 128-148, 168-188, 199-219, 239-259, 262-282, 288-308, and 337-357; these read GAMITSALIVFLFGPTIINSL, TPTMGGLMIMTGILASCLLWA, LASVYVWVVLMVSVGFGAIGF, FSGKARLGIEFLIAAIAAFTI, LVINLSWFFIPFAAFVMVGAG, GLAIVPVMVAAASFGFIAYLS, LAVVLGAVIGAGLGFLWFNAP, AIFMGDTGSLALGGMLGTVAV, IVLAIIGGLFVMEALSVIIQV, and QVVIRFWIVAIILAMIGLSTL.

Belongs to the glycosyltransferase 4 family. MraY subfamily. Requires Mg(2+) as cofactor.

The protein localises to the cell inner membrane. It carries out the reaction UDP-N-acetyl-alpha-D-muramoyl-L-alanyl-gamma-D-glutamyl-meso-2,6-diaminopimeloyl-D-alanyl-D-alanine + di-trans,octa-cis-undecaprenyl phosphate = di-trans,octa-cis-undecaprenyl diphospho-N-acetyl-alpha-D-muramoyl-L-alanyl-D-glutamyl-meso-2,6-diaminopimeloyl-D-alanyl-D-alanine + UMP. It functions in the pathway cell wall biogenesis; peptidoglycan biosynthesis. Its function is as follows. Catalyzes the initial step of the lipid cycle reactions in the biosynthesis of the cell wall peptidoglycan: transfers peptidoglycan precursor phospho-MurNAc-pentapeptide from UDP-MurNAc-pentapeptide onto the lipid carrier undecaprenyl phosphate, yielding undecaprenyl-pyrophosphoryl-MurNAc-pentapeptide, known as lipid I. This Brucella abortus (strain S19) protein is Phospho-N-acetylmuramoyl-pentapeptide-transferase.